We begin with the raw amino-acid sequence, 239 residues long: Orotidine 5'-phosphate decarboxylase (239 aa).

Substrate contacts are provided by residues Asp15, Lys36, 63 to 72 (DLKFHDIPNT), Thr127, Arg189, Gln198, Gly218, and Arg219. The active-site Proton donor is Lys65.

This sequence belongs to the OMP decarboxylase family. Type 1 subfamily. As to quaternary structure, homodimer.

The enzyme catalyses orotidine 5'-phosphate + H(+) = UMP + CO2. The protein operates within pyrimidine metabolism; UMP biosynthesis via de novo pathway; UMP from orotate: step 2/2. Its function is as follows. Catalyzes the decarboxylation of orotidine 5'-monophosphate (OMP) to uridine 5'-monophosphate (UMP). This chain is Orotidine 5'-phosphate decarboxylase, found in Prochlorococcus marinus (strain MIT 9515).